The sequence spans 301 residues: Mitochondrial import receptor subunit TOM40 homolog (301 aa).

Residues 1–19 (MATPTESELASPIPQTNPG) are compositionally biased toward polar residues. Residues 1–20 (MATPTESELASPIPQTNPGS) form a disordered region.

The protein belongs to the Tom40 family. In terms of assembly, forms part of the preprotein translocase complex of the outer mitochondrial membrane (TOM complex). Interacts with mitochondrial targeting sequences. Ubiquitously expressed, but highly expressed in the pharyngeal muscles, the nerve ring, the intestine, gonadal sheath and in the tail hypodermis.

The protein localises to the mitochondrion outer membrane. In terms of biological role, channel-forming protein essential for import of protein precursors into mitochondria. Specifically required for nnt-1 accumulation in the mitochondria and may be involved in the secretion of daf-28/insulin from the mitochondria. Required for embryonic and larval development. In Caenorhabditis elegans, this protein is Mitochondrial import receptor subunit TOM40 homolog.